The primary structure comprises 348 residues: Protein RecA (348 aa).

Position 66 to 73 (66 to 73) interacts with ATP; it reads GPESSGKT.

This sequence belongs to the RecA family.

It is found in the cytoplasm. Can catalyze the hydrolysis of ATP in the presence of single-stranded DNA, the ATP-dependent uptake of single-stranded DNA by duplex DNA, and the ATP-dependent hybridization of homologous single-stranded DNAs. It interacts with LexA causing its activation and leading to its autocatalytic cleavage. The protein is Protein RecA of Neisseria gonorrhoeae (strain NCCP11945).